Here is a 153-residue protein sequence, read N- to C-terminus: Bursicon (153 aa).

The N-terminal stretch at methionine 1 to alanine 22 is a signal peptide. Cystine bridges form between cysteine 29–cysteine 78, cysteine 43–cysteine 92, cysteine 53–cysteine 113, cysteine 57–cysteine 115, and cysteine 75–cysteine 118. In terms of domain architecture, CTCK spans cysteine 29 to threonine 119.

As to quaternary structure, heterodimer of burs and pburs.

It localises to the secreted. Its function is as follows. Final heterodimeric neurohormone released at the end of the molting cycle, involved in the sclerotization (tanning) of the insect cuticle, melanization and wing spreading. The chain is Bursicon from Apis mellifera (Honeybee).